A 727-amino-acid chain; its full sequence is Platelet endothelial cell adhesion molecule (727 aa).

The N-terminal stretch at 1–17 is a signal peptide; the sequence is MLLALGLTLVLYASLQA. The Extracellular segment spans residues 18-590; that stretch reads EENSFTINSI…VRVFLAPWKK (573 aa). Ig-like C2-type domains lie at 40-126, 135-213, 225-309, 315-391, 413-472, and 488-578; these read GQQL…PKVT, GGVV…PIRS, PKFE…IMVN, PKPK…LVPI, GHAI…NCHS, and PVDE…RSST. An intrachain disulfide couples cysteine 47 to cysteine 99. Residues asparagine 74 and asparagine 141 are each glycosylated (N-linked (GlcNAc...) asparagine). Disulfide bonds link cysteine 142-cysteine 195 and cysteine 245-cysteine 293. N-linked (GlcNAc...) asparagine glycosylation is found at asparagine 309, asparagine 345, asparagine 360, asparagine 424, and asparagine 540. Intrachain disulfides connect cysteine 336-cysteine 375, cysteine 420-cysteine 465, and cysteine 512-cysteine 561. A helical membrane pass occupies residues 591–609; the sequence is GLIAVVVIGVVIATLIVAA. The Cytoplasmic portion of the chain corresponds to 610–727; that stretch reads KCYFLRKAKA…SRTEGSLNGT (118 aa). A lipid anchor (S-palmitoyl cysteine) is attached at cysteine 611. The interval 642–672 is disordered; it reads SEPSVEANSHYGYDDVSGNDAVKPINQNKDP. 2 short sequence motifs (ITIM motif) span residues 677–682 and 700–705; these read VEYTEV and TVYSEI. A phosphotyrosine; by FER mark is found at tyrosine 679 and tyrosine 702. A membrane-bound segment which detaches upon phosphorylation region spans residues 698–718; it reads TETVYSEIRKVDPNLMENRYS. The may play a role in cytoprotective signaling stretch occupies residues 710–727; sequence PNLMENRYSRTEGSLNGT. Residues serine 718 and serine 723 each carry the phosphoserine modification.

As to quaternary structure, trans-homodimer (via Ig-like C2-type 1 and Ig-like C2-type 2 domains); trans-homodimerization is required for cell-cell interaction. Forms a complex with BDKRB2 and GNAQ. Interacts with BDKRB2 and GNAQ. Interacts with PTPN11; Tyr-702 is critical for PTPN11 recruitment. Interacts with FER. Interacts with CD177; the interaction is Ca(2+)-dependent; the interaction is direct. In terms of processing, phosphorylated on Ser and Tyr residues by src kinases after cellular activation. Upon activation, phosphorylated on Ser-718 which probably initiates the dissociation of the membrane-interaction segment (residues 698-718) from the cell membrane allowing the sequential phosphorylation of Tyr-702 and Tyr-679. Constitutively phosphorylated on Ser-723 in resting platelets. Phosphorylated on tyrosine residues by FER and FES in response to FCER1 activation. In endothelial cells Fyn mediates mechanical-force (stretch or pull) induced tyrosine phosphorylation. Palmitoylation by ZDHHC21 is necessary for cell surface expression in endothelial cells and enrichment in membrane rafts. As to expression, expressed in lung and platelets (at protein level).

Its subcellular location is the cell membrane. It is found in the membrane raft. The protein localises to the cell junction. In terms of biological role, cell adhesion molecule which is required for leukocyte transendothelial migration (TEM) under most inflammatory conditions. Tyr-679 plays a critical role in TEM and is required for efficient trafficking of PECAM1 to and from the lateral border recycling compartment (LBRC) and is also essential for the LBRC membrane to be targeted around migrating leukocytes. Trans-homophilic interaction may play a role in endothelial cell-cell adhesion via cell junctions. Heterophilic interaction with CD177 plays a role in transendothelial migration of neutrophils. Homophilic ligation of PECAM1 prevents macrophage-mediated phagocytosis of neighboring viable leukocytes by transmitting a detachment signal. Promotes macrophage-mediated phagocytosis of apoptotic leukocytes by tethering them to the phagocytic cells; PECAM1-mediated detachment signal appears to be disabled in apoptotic leukocytes. Modulates bradykinin receptor BDKRB2 activation. Regulates bradykinin- and hyperosmotic shock-induced ERK1/2 activation in endothelial cells. Induces susceptibility to atherosclerosis. This Mus musculus (Mouse) protein is Platelet endothelial cell adhesion molecule (Pecam1).